The chain runs to 245 residues: MHIDIIGDIHGCYREFTALTEKLGYVWDKGIPIHPDGRKLGFVGDLTDRGPESLKMIDIVCALVDRKLAHYVPGNHCNKLYRFFLGRNVQVTHGLETTVAEYRALPPSEQEMIRRKFIRLYEGAPLYAVLDEGRLVIAHAGIRHDYIGRMDKKVKTFVLYGDITGETNPDGTPVRRDWAKRYRGDAWIVYGHTPVEKPRFVGRTVNIDTGCVFGGALTALRYPEMTTVSVPSSMPHVPEKFRTFS.

It belongs to the PrpE family. Requires Ni(2+) as cofactor.

The enzyme catalyses P(1),P(4)-bis(5'-guanosyl) tetraphosphate + H2O = GMP + GTP + 2 H(+). Its function is as follows. Asymmetrically hydrolyzes Ap4p to yield AMP and ATP. This is Bis(5'-nucleosyl)-tetraphosphatase PrpE [asymmetrical] from Geobacillus thermodenitrificans (strain NG80-2).